The following is a 277-amino-acid chain: Shikimate dehydrogenase (NADP(+)) (277 aa).

Shikimate-binding positions include 15 to 17 and T62; that span reads SLS. K66 functions as the Proton acceptor in the catalytic mechanism. The shikimate site is built by N87 and D102. NADP(+) contacts are provided by residues 127 to 131, 151 to 156, and I219; these read GAGGA and NRTVDK. Y221 is a shikimate binding site. Residue G242 coordinates NADP(+).

This sequence belongs to the shikimate dehydrogenase family. Homodimer.

It carries out the reaction shikimate + NADP(+) = 3-dehydroshikimate + NADPH + H(+). The protein operates within metabolic intermediate biosynthesis; chorismate biosynthesis; chorismate from D-erythrose 4-phosphate and phosphoenolpyruvate: step 4/7. Its function is as follows. Involved in the biosynthesis of the chorismate, which leads to the biosynthesis of aromatic amino acids. Catalyzes the reversible NADPH linked reduction of 3-dehydroshikimate (DHSA) to yield shikimate (SA). This is Shikimate dehydrogenase (NADP(+)) from Bacillus cereus (strain 03BB102).